Consider the following 388-residue polypeptide: Mannitol-1-phosphate 5-dehydrogenase (388 aa).

Residue 5-16 (AIQFGGGNIGRG) coordinates NAD(+). K213 is a catalytic residue.

Belongs to the mannitol dehydrogenase family. As to quaternary structure, monomer.

It catalyses the reaction D-mannitol 1-phosphate + NAD(+) = beta-D-fructose 6-phosphate + NADH + H(+). Its function is as follows. Catalyzes the NAD(H)-dependent interconversion of D-fructose 6-phosphate and D-mannitol 1-phosphate in the metabolism of mannitol. Has a strong preference for NADH over NADPH. The protein is Mannitol-1-phosphate 5-dehydrogenase (mpdA) of Aspergillus niger (strain ATCC MYA-4892 / CBS 513.88 / FGSC A1513).